A 339-amino-acid chain; its full sequence is Exopolyphosphatase 1 (339 aa).

Residues 315 to 339 (QTSVRDTRGQEVDRNAANRSRGDKT) form a disordered region. Basic and acidic residues predominate over residues 319–339 (RDTRGQEVDRNAANRSRGDKT).

The protein belongs to the GppA/Ppx family. As to quaternary structure, homodimer.

The catalysed reaction is [phosphate](n) + H2O = [phosphate](n-1) + phosphate + H(+). Functionally, degradation of inorganic polyphosphates (polyP). Releases orthophosphate processively from the ends of the polyP chain. The protein is Exopolyphosphatase 1 of Mycobacterium leprae (strain TN).